The sequence spans 425 residues: GTPase Obg (425 aa).

The 158-residue stretch at 1-158 (MFVDVARIYV…RWLLLELKVV (158 aa)) folds into the Obg domain. Positions 159 to 330 (ADVGLVGFPN…LLEAAYDLIR (172 aa)) constitute an OBG-type G domain. Residues 165 to 172 (GFPNAGKS), 190 to 194 (FTTLT), 212 to 215 (DIPG), 282 to 285 (NKMD), and 311 to 313 (SGA) each bind GTP. 2 residues coordinate Mg(2+): Ser172 and Thr192. Residues 345–422 (VYRPKEEGWR…VCDIEFELMA (78 aa)) enclose the OCT domain.

This sequence belongs to the TRAFAC class OBG-HflX-like GTPase superfamily. OBG GTPase family. In terms of assembly, monomer. Mg(2+) is required as a cofactor.

Its subcellular location is the cytoplasm. Functionally, an essential GTPase which binds GTP, GDP and possibly (p)ppGpp with moderate affinity, with high nucleotide exchange rates and a fairly low GTP hydrolysis rate. Plays a role in control of the cell cycle, stress response, ribosome biogenesis and in those bacteria that undergo differentiation, in morphogenesis control. The protein is GTPase Obg of Symbiobacterium thermophilum (strain DSM 24528 / JCM 14929 / IAM 14863 / T).